Consider the following 252-residue polypeptide: 3-deoxy-manno-octulosonate cytidylyltransferase (252 aa).

Belongs to the KdsB family.

It is found in the cytoplasm. It catalyses the reaction 3-deoxy-alpha-D-manno-oct-2-ulosonate + CTP = CMP-3-deoxy-beta-D-manno-octulosonate + diphosphate. It participates in nucleotide-sugar biosynthesis; CMP-3-deoxy-D-manno-octulosonate biosynthesis; CMP-3-deoxy-D-manno-octulosonate from 3-deoxy-D-manno-octulosonate and CTP: step 1/1. The protein operates within bacterial outer membrane biogenesis; lipopolysaccharide biosynthesis. Functionally, activates KDO (a required 8-carbon sugar) for incorporation into bacterial lipopolysaccharide in Gram-negative bacteria. The chain is 3-deoxy-manno-octulosonate cytidylyltransferase from Xylella fastidiosa (strain Temecula1 / ATCC 700964).